A 66-amino-acid polypeptide reads, in one-letter code: MTENETLQKSSWKRHFTSTFPNRVKKIFKIKHSSSIPIVRVQPPTPRNSALFTTADFISYTTVYKV.

This is an uncharacterized protein from Schizosaccharomyces pombe (strain 972 / ATCC 24843) (Fission yeast).